We begin with the raw amino-acid sequence, 859 residues long: DNA mismatch repair protein MutS (859 aa).

614-621 (GPNMGGKS) serves as a coordination point for ATP.

It belongs to the DNA mismatch repair MutS family.

Its function is as follows. This protein is involved in the repair of mismatches in DNA. It is possible that it carries out the mismatch recognition step. This protein has a weak ATPase activity. The sequence is that of DNA mismatch repair protein MutS from Histophilus somni (strain 2336) (Haemophilus somnus).